The primary structure comprises 599 residues: Adenine deaminase (599 aa).

Positions M1–A31 are disordered.

The protein belongs to the metallo-dependent hydrolases superfamily. Adenine deaminase family. It depends on Mn(2+) as a cofactor.

It catalyses the reaction adenine + H2O + H(+) = hypoxanthine + NH4(+). This Methanopyrus kandleri (strain AV19 / DSM 6324 / JCM 9639 / NBRC 100938) protein is Adenine deaminase.